The sequence spans 215 residues: Urease accessory protein UreG (215 aa).

A GTP-binding site is contributed by 15–22 (GPVGSGKT).

The protein belongs to the SIMIBI class G3E GTPase family. UreG subfamily. As to quaternary structure, homodimer. UreD, UreF and UreG form a complex that acts as a GTP-hydrolysis-dependent molecular chaperone, activating the urease apoprotein by helping to assemble the nickel containing metallocenter of UreC. The UreE protein probably delivers the nickel.

The protein resides in the cytoplasm. Functionally, facilitates the functional incorporation of the urease nickel metallocenter. This process requires GTP hydrolysis, probably effectuated by UreG. This chain is Urease accessory protein UreG, found in Alcanivorax borkumensis (strain ATCC 700651 / DSM 11573 / NCIMB 13689 / SK2).